The following is a 187-amino-acid chain: UPF0340 protein SPT_0687 (187 aa).

The protein belongs to the UPF0340 family.

In Streptococcus pneumoniae (strain Taiwan19F-14), this protein is UPF0340 protein SPT_0687.